Reading from the N-terminus, the 156-residue chain is Small ribosomal subunit protein uS7 (156 aa).

It belongs to the universal ribosomal protein uS7 family. Part of the 30S ribosomal subunit. Contacts proteins S9 and S11.

One of the primary rRNA binding proteins, it binds directly to 16S rRNA where it nucleates assembly of the head domain of the 30S subunit. Is located at the subunit interface close to the decoding center, probably blocks exit of the E-site tRNA. The chain is Small ribosomal subunit protein uS7 from Symbiobacterium thermophilum (strain DSM 24528 / JCM 14929 / IAM 14863 / T).